The following is a 658-amino-acid chain: Glycogen debranching enzyme (658 aa).

Catalysis depends on Asp336, which acts as the Nucleophile. Catalysis depends on Glu371, which acts as the Proton donor. Residues 459-484 are disordered; that stretch reads EANGEENRDGTNSNYSDNHGKEGLGG.

It belongs to the glycosyl hydrolase 13 family.

It catalyses the reaction Hydrolysis of (1-&gt;6)-alpha-D-glucosidic linkages to branches with degrees of polymerization of three or four glucose residues in limit dextrin.. The protein operates within glycan degradation; glycogen degradation. Its function is as follows. Removes maltotriose and maltotetraose chains that are attached by 1,6-alpha-linkage to the limit dextrin main chain, generating a debranched limit dextrin. This Salmonella enteritidis PT4 (strain P125109) protein is Glycogen debranching enzyme.